A 375-amino-acid polypeptide reads, in one-letter code: Holliday junction branch migration complex subunit RuvB (375 aa).

Polar residues predominate over residues 1-22 (MAIVSSKQSPQPDGSKKPSQAK). The tract at residues 1–44 (MAIVSSKQSPQPDGSKKPSQAKSVKKSVEHSKPQQTDALLQPEA) is disordered. Residues 13–218 (DGSKKPSQAK…FGFVQRLRFY (206 aa)) are large ATPase domain (RuvB-L). Residues Leu57, Arg58, Gly99, Lys102, Thr103, Thr104, 165 to 167 (EDF), Arg208, Tyr218, and Arg255 each bind ATP. Thr103 lines the Mg(2+) pocket. The segment at 219-289 (EADELGQIVL…IAQEALELFN (71 aa)) is small ATPAse domain (RuvB-S). Residues 292–375 (PCGLDWTDRR…PPDEQMRLLS (84 aa)) form a head domain (RuvB-H) region. DNA-binding residues include Arg347 and Arg352.

It belongs to the RuvB family. In terms of assembly, homohexamer. Forms an RuvA(8)-RuvB(12)-Holliday junction (HJ) complex. HJ DNA is sandwiched between 2 RuvA tetramers; dsDNA enters through RuvA and exits via RuvB. An RuvB hexamer assembles on each DNA strand where it exits the tetramer. Each RuvB hexamer is contacted by two RuvA subunits (via domain III) on 2 adjacent RuvB subunits; this complex drives branch migration. In the full resolvosome a probable DNA-RuvA(4)-RuvB(12)-RuvC(2) complex forms which resolves the HJ.

It localises to the cytoplasm. The catalysed reaction is ATP + H2O = ADP + phosphate + H(+). Functionally, the RuvA-RuvB-RuvC complex processes Holliday junction (HJ) DNA during genetic recombination and DNA repair, while the RuvA-RuvB complex plays an important role in the rescue of blocked DNA replication forks via replication fork reversal (RFR). RuvA specifically binds to HJ cruciform DNA, conferring on it an open structure. The RuvB hexamer acts as an ATP-dependent pump, pulling dsDNA into and through the RuvAB complex. RuvB forms 2 homohexamers on either side of HJ DNA bound by 1 or 2 RuvA tetramers; 4 subunits per hexamer contact DNA at a time. Coordinated motions by a converter formed by DNA-disengaged RuvB subunits stimulates ATP hydrolysis and nucleotide exchange. Immobilization of the converter enables RuvB to convert the ATP-contained energy into a lever motion, pulling 2 nucleotides of DNA out of the RuvA tetramer per ATP hydrolyzed, thus driving DNA branch migration. The RuvB motors rotate together with the DNA substrate, which together with the progressing nucleotide cycle form the mechanistic basis for DNA recombination by continuous HJ branch migration. Branch migration allows RuvC to scan DNA until it finds its consensus sequence, where it cleaves and resolves cruciform DNA. This is Holliday junction branch migration complex subunit RuvB from Acaryochloris marina (strain MBIC 11017).